A 309-amino-acid polypeptide reads, in one-letter code: Ankyrin repeat and SOCS box protein 12 (309 aa).

ANK repeat units follow at residues Val63–Ser92, Lys96–Gly125, Asn129–Val158, Ser171–Tyr200, and Arg213–Leu243. One can recognise an SOCS box domain in the interval Pro268–Gln308.

The protein belongs to the ankyrin SOCS box (ASB) family. As to quaternary structure, interacts with CUL5 and RNF7.

Its pathway is protein modification; protein ubiquitination. Probable substrate-recognition component of a SCF-like ECS (Elongin-Cullin-SOCS-box protein) E3 ubiquitin-protein ligase complex which mediates the ubiquitination and subsequent proteasomal degradation of target proteins. The protein is Ankyrin repeat and SOCS box protein 12 (ASB12) of Homo sapiens (Human).